A 554-amino-acid polypeptide reads, in one-letter code: Dihydroxy-acid dehydratase (554 aa).

Cys-48 lines the [2Fe-2S] cluster pocket. Residue Asp-80 participates in Mg(2+) binding. Position 121 (Cys-121) interacts with [2Fe-2S] cluster. The Mg(2+) site is built by Asp-122 and Lys-123. Lys-123 carries the post-translational modification N6-carboxylysine. Cys-193 contacts [2Fe-2S] cluster. Mg(2+) is bound at residue Glu-444. Ser-470 serves as the catalytic Proton acceptor.

This sequence belongs to the IlvD/Edd family. In terms of assembly, homodimer. Requires [2Fe-2S] cluster as cofactor. Mg(2+) is required as a cofactor.

It catalyses the reaction (2R)-2,3-dihydroxy-3-methylbutanoate = 3-methyl-2-oxobutanoate + H2O. The enzyme catalyses (2R,3R)-2,3-dihydroxy-3-methylpentanoate = (S)-3-methyl-2-oxopentanoate + H2O. It functions in the pathway amino-acid biosynthesis; L-isoleucine biosynthesis; L-isoleucine from 2-oxobutanoate: step 3/4. It participates in amino-acid biosynthesis; L-valine biosynthesis; L-valine from pyruvate: step 3/4. Functions in the biosynthesis of branched-chain amino acids. Catalyzes the dehydration of (2R,3R)-2,3-dihydroxy-3-methylpentanoate (2,3-dihydroxy-3-methylvalerate) into 2-oxo-3-methylpentanoate (2-oxo-3-methylvalerate) and of (2R)-2,3-dihydroxy-3-methylbutanoate (2,3-dihydroxyisovalerate) into 2-oxo-3-methylbutanoate (2-oxoisovalerate), the penultimate precursor to L-isoleucine and L-valine, respectively. The protein is Dihydroxy-acid dehydratase of Tremblaya princeps.